The primary structure comprises 311 residues: tRNA-cytidine(32) 2-sulfurtransferase (311 aa).

The PP-loop motif signature appears at 47–52; the sequence is SGGKDS. Positions 122, 125, and 213 each coordinate [4Fe-4S] cluster.

The protein belongs to the TtcA family. As to quaternary structure, homodimer. It depends on Mg(2+) as a cofactor. [4Fe-4S] cluster is required as a cofactor.

Its subcellular location is the cytoplasm. The enzyme catalyses cytidine(32) in tRNA + S-sulfanyl-L-cysteinyl-[cysteine desulfurase] + AH2 + ATP = 2-thiocytidine(32) in tRNA + L-cysteinyl-[cysteine desulfurase] + A + AMP + diphosphate + H(+). Its pathway is tRNA modification. Its function is as follows. Catalyzes the ATP-dependent 2-thiolation of cytidine in position 32 of tRNA, to form 2-thiocytidine (s(2)C32). The sulfur atoms are provided by the cysteine/cysteine desulfurase (IscS) system. The chain is tRNA-cytidine(32) 2-sulfurtransferase from Escherichia coli O1:K1 / APEC.